The following is a 249-amino-acid chain: Exosome complex component Rrp41 (249 aa).

Belongs to the RNase PH family. Rrp41 subfamily. Component of the archaeal exosome complex. Forms a hexameric ring-like arrangement composed of 3 Rrp41-Rrp42 heterodimers. The hexameric ring associates with a trimer of Rrp4 and/or Csl4 subunits.

It localises to the cytoplasm. Functionally, catalytic component of the exosome, which is a complex involved in RNA degradation. Has 3'-&gt;5' exoribonuclease activity. Can also synthesize heteromeric RNA-tails. In Thermococcus gammatolerans (strain DSM 15229 / JCM 11827 / EJ3), this protein is Exosome complex component Rrp41.